A 128-amino-acid chain; its full sequence is Cytochrome c-type biogenesis protein CcmE (128 aa).

Over 1-7 (MKKKHKR) the chain is Cytoplasmic. The helical; Signal-anchor for type II membrane protein transmembrane segment at 8-28 (LLVASGIFFFLNCIVFFILTI) threads the bilayer. Topologically, residues 29 to 128 (LRENISFFYT…KHDENYMPRK (100 aa)) are extracellular. Residues histidine 120 and tyrosine 124 each contribute to the heme site.

Belongs to the CcmE/CycJ family.

It is found in the cell membrane. In terms of biological role, heme chaperone required for the biogenesis of c-type cytochromes. Transiently binds heme delivered by CcmC and transfers the heme to apo-cytochromes in a process facilitated by CcmF and CcmH. This is Cytochrome c-type biogenesis protein CcmE from Wolbachia sp. subsp. Brugia malayi (strain TRS).